Reading from the N-terminus, the 2885-residue chain is E3 ubiquitin-protein ligase hyd (2885 aa).

The interval 83 to 138 (SDAKCSTSGGSGTASASKAPSSSRPMARSRARLLRATGRSNSTGQGSGSRSTGVII) is disordered. Composition is skewed to low complexity over residues 95–108 (TASA…SRPM) and 116–138 (LRAT…GVII). A UBA domain is found at 154–196 (YVPEELISQAEVVLQGKSRNLIIRELQRTNLDVNLAVNNLLSR). Residues 266–276 (ANANAADSNQS) show a composition bias toward low complexity. Disordered stretches follow at residues 266–291 (ANAN…TGNS), 580–664 (NNLN…GRKD), and 711–731 (AATS…KEDD). Polar residues-rich tracts occupy residues 277–291 (TTRS…TGNS) and 598–615 (AMPS…SNSK). 2 positions are modified to phosphoserine: Ser628 and Ser631. The span at 650-664 (TTKEDSNAPQEGRKD) shows a compositional bias: basic and acidic residues. Residues 711 to 722 (AATSSTSNTAST) show a composition bias toward low complexity. Ser967 is subject to Phosphoserine. Positions 1008 to 1032 (ASSSNENSSFATMSSSAAGSASSTS) are enriched in low complexity. Positions 1008–1035 (ASSSNENSSFATMSSSAAGSASSTSRDN) are disordered. The UBR-type zinc-finger motif lies at 1217 to 1285 (DTCSFTWTGA…EKCKCKALIA (69 aa)). The residue at position 1362 (Ser1362) is a Phosphoserine. The segment at 1642 to 1761 (NEDGMQDDES…IRSRDTARSS (120 aa)) is disordered. A compositionally biased stretch (polar residues) spans 1669–1681 (NQSNQEVQRSVQA). Acidic residues predominate over residues 1696–1721 (LEDESGDSSAQEEDGSEDGESDDQSD). The span at 1735-1749 (TNSNARSDLAPQTMQ) shows a compositional bias: polar residues. Position 2037 is a phosphoserine (Ser2037). Positions 2124-2143 (IDSSKTGDGNVTNKAEGSTD) are disordered. Ser2183 bears the Phosphoserine mark. Residues 2473-2492 (NLDARPYTPPNSSDNATPES) are disordered. The segment covering 2482–2492 (PNSSDNATPES) has biased composition (polar residues). The region spanning 2484-2561 (SSDNATPESL…AIEIITFKQK (78 aa)) is the PABC domain. Ser2574 is subject to Phosphoserine. An HECT domain is found at 2782–2885 (FNDESSEGPD…AIKSKNFGFV (104 aa)). Cys2854 acts as the Glycyl thioester intermediate in catalysis.

The protein belongs to the UBR5 family.

The protein localises to the nucleus. Its subcellular location is the cytoplasm. The catalysed reaction is S-ubiquitinyl-[E2 ubiquitin-conjugating enzyme]-L-cysteine + [acceptor protein]-L-lysine = [E2 ubiquitin-conjugating enzyme]-L-cysteine + N(6)-ubiquitinyl-[acceptor protein]-L-lysine.. It participates in protein modification; protein ubiquitination. E3 ubiquitin-protein ligase which accepts ubiquitin from an E2 ubiquitin-conjugating enzyme in the form of a thioester and then directly transfers the ubiquitin to targeted substrate. Required for regulation of cell proliferation in imaginal disks and germ cells. Acts as a negative regulator of hh, ci and dpp expression in the anterior of the eye disk. Acts as a positive regulator of the canonical Wnt signaling pathway by mediating ubiquitination and degradation of gro. Catalyzes 'Lys-63'-linked polyubiquitination of akirin, thereby activating the immune deficiency pathway (Imd). This is E3 ubiquitin-protein ligase hyd (hyd) from Drosophila melanogaster (Fruit fly).